The primary structure comprises 353 residues: UPF0283 membrane protein YpsIP31758_1791 (353 aa).

3 helical membrane-spanning segments follow: residues M71–V91, I101–V121, and E214–W234.

Belongs to the UPF0283 family.

The protein localises to the cell inner membrane. In Yersinia pseudotuberculosis serotype O:1b (strain IP 31758), this protein is UPF0283 membrane protein YpsIP31758_1791.